The primary structure comprises 496 residues: Glutamate--tRNA ligase (496 aa).

Positions 10-20 (PSPTGPLHIGG) match the 'HIGH' region motif. Residues 251 to 255 (KMSKR) carry the 'KMSKS' region motif. Lys254 provides a ligand contact to ATP.

It belongs to the class-I aminoacyl-tRNA synthetase family. Glutamate--tRNA ligase type 1 subfamily. As to quaternary structure, monomer.

The protein localises to the cytoplasm. It catalyses the reaction tRNA(Glu) + L-glutamate + ATP = L-glutamyl-tRNA(Glu) + AMP + diphosphate. Catalyzes the attachment of glutamate to tRNA(Glu) in a two-step reaction: glutamate is first activated by ATP to form Glu-AMP and then transferred to the acceptor end of tRNA(Glu). The chain is Glutamate--tRNA ligase from Heliobacterium modesticaldum (strain ATCC 51547 / Ice1).